Reading from the N-terminus, the 298-residue chain is Apolipoprotein E (298 aa).

A signal peptide spans 1 to 18 (MKVLWAALVVTLLAGCRA). Tandem repeats lie at residues 74 to 94 (LLIEDTMKEVKDYKAELEKEL), 95 to 116 (GPVAEDTKARLAKELQAAQARL), 117 to 138 (GADMEEVRNRLSQYRSEVQAML), 139 to 160 (GQSSEELRARLTSHLRKMRKRL), 161 to 182 (QRDIDELQKRMAVYKAGAQEGA), 183 to 203 (ERGVSAIRERLGSLIEQGRLQ), 204 to 221 (ALTSQPLQERAQAWGEQM), and 222 to 243 (RGRLEKVGSQARDRLEEVREQM). The 8 X 22 AA approximate tandem repeats stretch occupies residues 95–243 (GPVAEDTKAR…DRLEEVREQM (149 aa)). Methionine 137 is modified (methionine sulfoxide). Serine 141 carries the phosphoserine modification. The interval 151–161 (SHLRKMRKRLQ) is LDL and other lipoprotein receptors binding. 155–158 (KMRK) contributes to the heparin binding site. Positions 203–271 (QALTSQPLQE…KSWFEPMMED (69 aa)) are lipid-binding and lipoprotein association. A heparin-binding site is contributed by 217–224 (WGEQMRGR). The specificity for association with VLDL stretch occupies residues 259–271 (ARLKSWFEPMMED).

The protein belongs to the apolipoprotein A1/A4/E family. As to quaternary structure, homotetramer. May interact with ABCA1; functionally associated with ABCA1 in the biogenesis of HDLs. May interact with APP/A4 amyloid-beta peptide; the interaction is extremely stable in vitro but its physiological significance is unclear. May interact with MAPT. May interact with MAP2. In the cerebrospinal fluid, interacts with secreted SORL1. Interacts with PMEL; this allows the loading of PMEL luminal fragment on ILVs to induce fibril nucleation. Post-translationally, APOE exists as multiple glycosylated and sialylated glycoforms within cells and in plasma. The extent of glycosylation and sialylation are tissue and context specific. Glycated in plasma VLDL. In terms of processing, phosphorylated by FAM20C in the extracellular medium.

Its subcellular location is the secreted. The protein resides in the extracellular space. It is found in the extracellular matrix. It localises to the extracellular vesicle. The protein localises to the endosome. Its subcellular location is the multivesicular body. Its function is as follows. APOE is an apolipoprotein, a protein associating with lipid particles, that mainly functions in lipoprotein-mediated lipid transport between organs via the plasma and interstitial fluids. APOE is a core component of plasma lipoproteins and is involved in their production, conversion and clearance. Apolipoproteins are amphipathic molecules that interact both with lipids of the lipoprotein particle core and the aqueous environment of the plasma. As such, APOE associates with chylomicrons, chylomicron remnants, very low density lipoproteins (VLDL) and intermediate density lipoproteins (IDL) but shows a preferential binding to high-density lipoproteins (HDL). It also binds a wide range of cellular receptors including the LDL receptor/LDLR, the LDL receptor-related proteins LRP1, LRP2 and LRP8 and the very low-density lipoprotein receptor/VLDLR that mediate the cellular uptake of the APOE-containing lipoprotein particles. Finally, APOE also has a heparin-binding activity and binds heparan-sulfate proteoglycans on the surface of cells, a property that supports the capture and the receptor-mediated uptake of APOE-containing lipoproteins by cells. A main function of APOE is to mediate lipoprotein clearance through the uptake of chylomicrons, VLDLs, and HDLs by hepatocytes. APOE is also involved in the biosynthesis by the liver of VLDLs as well as their uptake by peripheral tissues ensuring the delivery of triglycerides and energy storage in muscle, heart and adipose tissues. By participating in the lipoprotein-mediated distribution of lipids among tissues, APOE plays a critical role in plasma and tissues lipid homeostasis. APOE is also involved in two steps of reverse cholesterol transport, the HDLs-mediated transport of cholesterol from peripheral tissues to the liver, and thereby plays an important role in cholesterol homeostasis. First, it is functionally associated with ABCA1 in the biogenesis of HDLs in tissues. Second, it is enriched in circulating HDLs and mediates their uptake by hepatocytes. APOE also plays an important role in lipid transport in the central nervous system, regulating neuron survival and sprouting. This chain is Apolipoprotein E (APOE), found in Cavia tschudii (Montane guinea pig).